Reading from the N-terminus, the 328-residue chain is Ketol-acid reductoisomerase (NADP(+)) (328 aa).

The 180-residue stretch at 2-181 folds into the KARI N-terminal Rossmann domain; sequence AKIYRETDAD…GFTRVGVIET (180 aa). Residues 25–28, Arg48, Ser52, and 82–85 contribute to the NADP(+) site; these read YGIQ and DMVQ. His107 is an active-site residue. Gly133 provides a ligand contact to NADP(+). The 146-residue stretch at 182-327 folds into the KARI C-terminal knotted domain; that stretch reads TFAEETETDL…EDLRRLMRSG (146 aa). Positions 190, 194, 226, and 230 each coordinate Mg(2+). Ser251 contacts substrate.

This sequence belongs to the ketol-acid reductoisomerase family. Mg(2+) serves as cofactor.

The catalysed reaction is (2R)-2,3-dihydroxy-3-methylbutanoate + NADP(+) = (2S)-2-acetolactate + NADPH + H(+). It carries out the reaction (2R,3R)-2,3-dihydroxy-3-methylpentanoate + NADP(+) = (S)-2-ethyl-2-hydroxy-3-oxobutanoate + NADPH + H(+). Its pathway is amino-acid biosynthesis; L-isoleucine biosynthesis; L-isoleucine from 2-oxobutanoate: step 2/4. It participates in amino-acid biosynthesis; L-valine biosynthesis; L-valine from pyruvate: step 2/4. Involved in the biosynthesis of branched-chain amino acids (BCAA). Catalyzes an alkyl-migration followed by a ketol-acid reduction of (S)-2-acetolactate (S2AL) to yield (R)-2,3-dihydroxy-isovalerate. In the isomerase reaction, S2AL is rearranged via a Mg-dependent methyl migration to produce 3-hydroxy-3-methyl-2-ketobutyrate (HMKB). In the reductase reaction, this 2-ketoacid undergoes a metal-dependent reduction by NADPH to yield (R)-2,3-dihydroxy-isovalerate. The polypeptide is Ketol-acid reductoisomerase (NADP(+)) (Caldivirga maquilingensis (strain ATCC 700844 / DSM 13496 / JCM 10307 / IC-167)).